The chain runs to 129 residues: Lysozyme C-1/C-2 (129 aa).

In terms of domain architecture, C-type lysozyme spans K1–L129. 4 cysteine pairs are disulfide-bonded: C6-C127, C30-C115, C65-C81, and C77-C95. Active-site residues include E35 and D53.

Belongs to the glycosyl hydrolase 22 family. In terms of assembly, monomer.

The catalysed reaction is Hydrolysis of (1-&gt;4)-beta-linkages between N-acetylmuramic acid and N-acetyl-D-glucosamine residues in a peptidoglycan and between N-acetyl-D-glucosamine residues in chitodextrins.. Lysozymes have primarily a bacteriolytic function; those in tissues and body fluids are associated with the monocyte-macrophage system and enhance the activity of immunoagents. This chain is Lysozyme C-1/C-2, found in Axis axis (Axis deer).